The primary structure comprises 317 residues: Cytochrome c biogenesis protein CcsA (317 aa).

A run of 8 helical transmembrane segments spans residues 17–37, 44–64, 71–91, 101–121, 143–163, 223–243, 252–272, and 284–304; these read VVSI…IVGL, GMIV…IYSG, LYES…LPYL, ITSP…LTQI, MILS…LLVI, IISI…VWAN, WDPK…YLHI, and AIVA…INIL.

The protein belongs to the CcmF/CycK/Ccl1/NrfE/CcsA family. In terms of assembly, may interact with Ccs1.

The protein resides in the plastid. Its subcellular location is the chloroplast thylakoid membrane. In terms of biological role, required during biogenesis of c-type cytochromes (cytochrome c6 and cytochrome f) at the step of heme attachment. The sequence is that of Cytochrome c biogenesis protein CcsA from Pelargonium hortorum (Common geranium).